The sequence spans 397 residues: t-SNARE affecting a late Golgi compartment protein 2 (397 aa).

The Cytoplasmic portion of the chain corresponds to Met-1 to Lys-317. Residues Asp-74–Val-96 are a coiled coil. Position 109 is a phosphoserine (Ser-109). The region spanning Glu-244 to Ala-306 is the t-SNARE coiled-coil homology domain. Residues Val-318–His-338 traverse the membrane as a helical; Anchor for type IV membrane protein segment. The Vesicular segment spans residues Gly-339–Leu-397. The segment at Gly-341 to Leu-397 is disordered. Positions Asn-353–Asp-374 are enriched in basic and acidic residues. Residues Thr-386–Leu-397 are compositionally biased toward acidic residues.

Belongs to the syntaxin family. In terms of assembly, interacts with VPS45.

The protein localises to the golgi apparatus. The protein resides in the trans-Golgi network membrane. It is found in the endosome membrane. Functionally, t-SNARE that functions in transport from the endosome to the late Golgi and on the endocytic pathway. This is t-SNARE affecting a late Golgi compartment protein 2 (TLG2) from Saccharomyces cerevisiae (strain ATCC 204508 / S288c) (Baker's yeast).